The following is a 435-amino-acid chain: Glutamate-1-semialdehyde 2,1-aminomutase (435 aa).

Lys-266 bears the N6-(pyridoxal phosphate)lysine mark.

Belongs to the class-III pyridoxal-phosphate-dependent aminotransferase family. HemL subfamily. Homodimer. Requires pyridoxal 5'-phosphate as cofactor.

Its subcellular location is the cytoplasm. It catalyses the reaction (S)-4-amino-5-oxopentanoate = 5-aminolevulinate. Its pathway is porphyrin-containing compound metabolism; protoporphyrin-IX biosynthesis; 5-aminolevulinate from L-glutamyl-tRNA(Glu): step 2/2. The polypeptide is Glutamate-1-semialdehyde 2,1-aminomutase (Helicobacter hepaticus (strain ATCC 51449 / 3B1)).